We begin with the raw amino-acid sequence, 50 residues long: Defensin-like protein 1 (50 aa).

4 cysteine pairs are disulfide-bonded: C2-C50, C14-C35, C20-C44, and C24-C46.

This sequence belongs to the DEFL family.

The protein resides in the secreted. Functionally, possesses antimicrobial activity sensitive to inorganic cations. Binds specifically to the fungal plasma membrane. Has no inhibitory effect on insect gut alpha-amylase. This chain is Defensin-like protein 1, found in Aesculus hippocastanum (Horse chestnut).